A 61-amino-acid chain; its full sequence is Sperm protamine P1 (61 aa).

Positions Met1 to Tyr61 are disordered.

This sequence belongs to the protamine P1 family. In terms of tissue distribution, testis.

It localises to the nucleus. The protein resides in the chromosome. Protamines substitute for histones in the chromatin of sperm during the haploid phase of spermatogenesis. They compact sperm DNA into a highly condensed, stable and inactive complex. In Setonix brachyurus (Quokka), this protein is Sperm protamine P1 (PRM1).